Consider the following 1579-residue polypeptide: tRNA (guanosine(18)-2'-O)-methyltransferase TARBP1 (1579 aa).

At methionine 1 the chain carries N-acetylmethionine. 5 residues coordinate S-adenosyl-L-homocysteine: valine 1501, glycine 1524, isoleucine 1544, glutamine 1546, and leucine 1553.

Belongs to the class IV-like SAM-binding methyltransferase superfamily. RNA methyltransferase TrmH family. As to quaternary structure, monomer and homodimer.

It catalyses the reaction guanosine(18) in tRNA + S-adenosyl-L-methionine = 2'-O-methylguanosine(18) in tRNA + S-adenosyl-L-homocysteine + H(+). S-adenosyl-L-methionine-dependent 2'-O-ribose methyltransferase that catalyzes the formation of 2'-O-methylguanosine at position 18 (Gm18) in a subset of tRNA. Selectively mediates Gm18 methylation of tRNAGln-TTG/CTG and tRNASer-TGA/GCT. Gm18 modification can enhance the stability of modified tRNAs. This is tRNA (guanosine(18)-2'-O)-methyltransferase TARBP1 from Mus musculus (Mouse).